Here is a 189-residue protein sequence, read N- to C-terminus: Dual specificity phosphatase 21 (189 aa).

The Tyrosine-protein phosphatase domain occupies 20 to 161; the sequence is GLSQITASLF…LIHYEFKLFS (142 aa). The sufficient for mitochondrial localization stretch occupies residues 43-128; sequence SNNHITTIIN…YLMKYHNMTL (86 aa). The Phosphocysteine intermediate role is filled by Cys105.

Belongs to the protein-tyrosine phosphatase family. Non-receptor class dual specificity subfamily. In terms of assembly, microtubule inner protein component of sperm flagellar doublet microtubules. Selectively expressed in testis.

It is found in the cytoplasm. Its subcellular location is the nucleus. The protein localises to the mitochondrion inner membrane. The protein resides in the cytoskeleton. It localises to the flagellum axoneme. It carries out the reaction O-phospho-L-tyrosyl-[protein] + H2O = L-tyrosyl-[protein] + phosphate. The catalysed reaction is O-phospho-L-seryl-[protein] + H2O = L-seryl-[protein] + phosphate. It catalyses the reaction O-phospho-L-threonyl-[protein] + H2O = L-threonyl-[protein] + phosphate. Functionally, protein phosphatase component of the sperm flagellar doublet microtubules. May act as a regulator of sperm motility by mediating dephosphorylation of sperm doublet microtubule proteins. Can dephosphorylate single and diphosphorylated synthetic MAPK peptides, with preference for the phosphotyrosine and diphosphorylated forms over phosphothreonine. This Mus musculus (Mouse) protein is Dual specificity phosphatase 21.